The primary structure comprises 613 residues: Myrcene synthase, chloroplastic (613 aa).

Residues 1–46 (MQCMAVHQFAPLLSLLNCSRISSDFGRLFTPKTSTKSRSSTCHPIQ) constitute a chloroplast transit peptide. Residues Arg-324, Asp-361, and Asp-365 each contribute to the (2E)-geranyl diphosphate site. 2 residues coordinate Mg(2+): Asp-361 and Asp-365. The DDXXD motif signature appears at 361 to 365 (DDIYD). A helical membrane pass occupies residues 455-475 (IEMAWLSIGGPVILVHAYFCF). Positions 503 and 506 each coordinate (2E)-geranyl diphosphate. The Mg(2+) site is built by Asp-506, Thr-510, and Glu-514.

It belongs to the terpene synthase family. Tpsb subfamily. Mg(2+) serves as cofactor. It depends on Mn(2+) as a cofactor. Expressed in trichomes.

Its subcellular location is the plastid. The protein localises to the chloroplast membrane. The enzyme catalyses (2E)-geranyl diphosphate = beta-myrcene + diphosphate. It participates in secondary metabolite biosynthesis; terpenoid biosynthesis. In terms of biological role, monoterpene synthase that catalyzes the formation of myrcene. Can use geranyl diphosphate as substrate, but not farnesyl diphosphate or geranylgeranyl diphosphate. The sequence is that of Myrcene synthase, chloroplastic from Humulus lupulus (European hop).